A 424-amino-acid polypeptide reads, in one-letter code: 3-phosphoshikimate 1-carboxyvinyltransferase (424 aa).

Residues lysine 20, serine 21, and arginine 25 each contribute to the 3-phosphoshikimate site. Position 20 (lysine 20) interacts with phosphoenolpyruvate. Glycine 92 and arginine 120 together coordinate phosphoenolpyruvate. Residues serine 165, glutamine 167, aspartate 313, and lysine 340 each contribute to the 3-phosphoshikimate site. Glutamine 167 is a binding site for phosphoenolpyruvate. Aspartate 313 serves as the catalytic Proton acceptor. Phosphoenolpyruvate contacts are provided by arginine 344 and arginine 386.

It belongs to the EPSP synthase family. Monomer.

The protein resides in the cytoplasm. The enzyme catalyses 3-phosphoshikimate + phosphoenolpyruvate = 5-O-(1-carboxyvinyl)-3-phosphoshikimate + phosphate. It participates in metabolic intermediate biosynthesis; chorismate biosynthesis; chorismate from D-erythrose 4-phosphate and phosphoenolpyruvate: step 6/7. In terms of biological role, catalyzes the transfer of the enolpyruvyl moiety of phosphoenolpyruvate (PEP) to the 5-hydroxyl of shikimate-3-phosphate (S3P) to produce enolpyruvyl shikimate-3-phosphate and inorganic phosphate. This is 3-phosphoshikimate 1-carboxyvinyltransferase from Bacillus cytotoxicus (strain DSM 22905 / CIP 110041 / 391-98 / NVH 391-98).